Reading from the N-terminus, the 373-residue chain is Cytoplasmic tRNA 2-thiolation protein 1 (373 aa).

Belongs to the TtcA family. CTU1/NCS6/ATPBD3 subfamily.

Its subcellular location is the cytoplasm. Its pathway is tRNA modification; 5-methoxycarbonylmethyl-2-thiouridine-tRNA biosynthesis. Plays a central role in 2-thiolation of mcm(5)S(2)U at tRNA wobble positions of tRNA(Lys), tRNA(Glu) and tRNA(Gln). Directly binds tRNAs and probably acts by catalyzing adenylation of tRNAs, an intermediate required for 2-thiolation. It is unclear whether it acts as a sulfurtransferase that transfers sulfur from thiocarboxylated URM1 onto the uridine of tRNAs at wobble position. Prior mcm(5) tRNA modification by the elongator complex is required for 2-thiolation. May also be involved in protein urmylation. This is Cytoplasmic tRNA 2-thiolation protein 1 from Eremothecium gossypii (strain ATCC 10895 / CBS 109.51 / FGSC 9923 / NRRL Y-1056) (Yeast).